The chain runs to 399 residues: Transferrin receptor subunit ESAG6 (399 aa).

A signal peptide spans 1–17 (MRFWFVLLALLGKEIYA). Residues Asn26 and Asn110 are each glycosylated (N-linked (GlcNAc...) asparagine). 3 disulfides stabilise this stretch: Cys34–Cys161, Cys84–Cys312, and Cys144–Cys215. Asn235, Asn250, and Asn360 each carry an N-linked (GlcNAc...) asparagine glycan. Asn376 is lipidated: GPI-anchor amidated asparagine. Residues 377–399 (AAAIHLSVSTAALCRSALLLGVL) constitute a propeptide, removed in mature form.

As to quaternary structure, heterodimer composed of ESAG6 and ESAG7. In terms of processing, N-glycosylated. Glycosylation is dispensable for heterodimer formation and host transferrin binding.

The protein localises to the cell membrane. It is found in the flagellar pocket. Its function is as follows. Transferrin receptor subunit involved in receptor-mediated acquisition of iron from the environment by binding host TF/transferrin. The sequence is that of Transferrin receptor subunit ESAG6 from Trypanosoma brucei brucei.